The sequence spans 155 residues: Ribosomal RNA large subunit methyltransferase H (155 aa).

S-adenosyl-L-methionine is bound by residues Leu73, Gly104, and 123–128 (LSALTL).

Belongs to the RNA methyltransferase RlmH family. As to quaternary structure, homodimer.

It localises to the cytoplasm. It carries out the reaction pseudouridine(1915) in 23S rRNA + S-adenosyl-L-methionine = N(3)-methylpseudouridine(1915) in 23S rRNA + S-adenosyl-L-homocysteine + H(+). In terms of biological role, specifically methylates the pseudouridine at position 1915 (m3Psi1915) in 23S rRNA. This Chromohalobacter salexigens (strain ATCC BAA-138 / DSM 3043 / CIP 106854 / NCIMB 13768 / 1H11) protein is Ribosomal RNA large subunit methyltransferase H.